A 787-amino-acid polypeptide reads, in one-letter code: uncharacterized protein (787 aa).

M1 is modified (N-acetylmethionine). Disordered regions lie at residues M1–K115, T130–E200, and V217–D238. Residues V36–T54 show a composition bias toward polar residues. The residue at position 63 (S63) is a Phosphoserine. The segment covering T130–H142 has biased composition (polar residues). Residues S160–T169 show a composition bias toward low complexity. Basic and acidic residues predominate over residues T170–S184. A compositionally biased stretch (low complexity) spans S218–N230. A phosphoserine mark is found at S254, S313, S342, S345, S390, S477, S492, S546, S683, and S699.

Its subcellular location is the cytoplasm. This is an uncharacterized protein from Saccharomyces cerevisiae (strain ATCC 204508 / S288c) (Baker's yeast).